Here is a 64-residue protein sequence, read N- to C-terminus: Tracheal antimicrobial peptide (64 aa).

The N-terminal stretch at 1–26 is a signal peptide; it reads MRLHHLLLALLFLVLSAWSGFTQGVG. 3 cysteine pairs are disulfide-bonded: C31/C60, C38/C53, and C43/C61.

The protein belongs to the beta-defensin family. LAP/TAP subfamily. As to expression, tracheal epithelium.

It is found in the secreted. Functionally, has antibacterial activity in vitro against Escherichia coli, Staphylococcus aureus, Klebsiella pneumonia, and Pseudomonas aeruginosa. In addition, the peptide is active against Candida albicans, indicating a broad spectrum of activity. The sequence is that of Tracheal antimicrobial peptide from Bos taurus (Bovine).